Consider the following 462-residue polypeptide: Proteases secretion protein PrtF (462 aa).

Positions methionine 1–glycine 23 are cleaved as a signal peptide.

Belongs to the outer membrane factor (OMF) (TC 1.B.17) family.

Its subcellular location is the cell outer membrane. Functionally, involved in the secretion of proteases A, B, C and G. The polypeptide is Proteases secretion protein PrtF (prtF) (Dickeya chrysanthemi (Pectobacterium chrysanthemi)).